The chain runs to 87 residues: Retinal rod rhodopsin-sensitive cGMP 3',5'-cyclic phosphodiesterase subunit gamma (87 aa).

An N-acetylmethionine modification is found at Met1. Residues 1 to 12 (MNLEPPKAEIRS) show a composition bias toward basic and acidic residues. The segment at 1–55 (MNLEPPKAEIRSATRVMGGPVTPRKGPPKFKQRQTRQFKSKPPKKGVQGFGDDIP) is disordered. Residues 26–44 (GPPKFKQRQTRQFKSKPPK) are compositionally biased toward basic residues.

Belongs to the rod/cone cGMP-PDE gamma subunit family. As to quaternary structure, oligomer composed of two catalytic chains (alpha and beta), an inhibitory chain (gamma) and the delta chain.

The enzyme catalyses 3',5'-cyclic GMP + H2O = GMP + H(+). In terms of biological role, participates in processes of transmission and amplification of the visual signal. cGMP-PDEs are the effector molecules in G-protein-mediated phototransduction in vertebrate rods and cones. The chain is Retinal rod rhodopsin-sensitive cGMP 3',5'-cyclic phosphodiesterase subunit gamma (PDE6G) from Bos taurus (Bovine).